Reading from the N-terminus, the 483-residue chain is Nucleolar protein 4 (483 aa).

Disordered stretches follow at residues 210–418 (QQDE…PIPS) and 435–483 (SESR…DPQI). Residues 211-225 (QDEDESSIESDEFDM) are compositionally biased toward acidic residues. 3 stretches are compositionally biased toward polar residues: residues 229–254 (TRMSAVNSDLSSNLEERMQSPQTVHG), 262–271 (AESSNGNETL), and 302–317 (QPLNLSDSPSSAQLTS). Basic and acidic residues-rich tracts occupy residues 319–330 (FRIDDQGSDGKN) and 340–350 (LKMEREARENG). The span at 351–363 (SKSPAHSYSSYDS) shows a compositional bias: polar residues. Composition is skewed to basic and acidic residues over residues 364–374 (GKNESVDRGAE), 391–409 (HEDSEKVNETDGVEAERLK), and 435–451 (SESRNAAKRMRLDKAQD). The segment covering 467 to 483 (ATYSTATVPGSQEDPQI) has biased composition (polar residues).

It is found in the nucleus. The protein localises to the nucleolus. The protein is Nucleolar protein 4 (Nol4) of Mus musculus (Mouse).